The following is a 469-amino-acid chain: Properdin (469 aa).

An N-terminal signal peptide occupies residues 1–27; the sequence is MITEGAQAPRLLLPPLLLLLTLPATGS. 7 TSP type-1 domains span residues 28–76, 77–134, 136–191, 193–255, 257–313, 315–377, and 379–462; these read DPVL…QPCR, SPRW…QCCP, MGGW…QSCP, HGAW…PPCP, AGSW…VPCP, DGEW…QHCP, and KGSW…PACK. Disulfide bonds link Cys32-Cys56, Cys43-Cys72, and Cys57-Cys75. Residues Trp83 and Trp86 are each glycosylated (C-linked (Man) tryptophan). 7 disulfides stabilise this stretch: Cys89/Cys127, Cys93/Cys133, Cys104/Cys111, Cys132/Cys170, Cys148/Cys184, Cys152/Cys190, and Cys163/Cys174. C-linked (Man) tryptophan glycans are attached at residues Trp139, Trp142, and Trp145. Residue Thr151 is glycosylated (O-linked (Fuc...) threonine). C-linked (Man) tryptophan glycosylation is found at Trp196, Trp199, and Trp202. Disulfide bonds link Cys205–Cys248, Cys209–Cys254, and Cys224–Cys238. O-linked (Fuc...) serine glycosylation is present at Ser208. Residues 218–238 are disordered; it reads ETRSRKCSAPEPSQKPPGKPC. C-linked (Man) tryptophan glycosylation is found at Trp260 and Trp263. Disulfide bonds link Cys269–Cys306, Cys273–Cys312, and Cys284–Cys296. A glycan (O-linked (Fuc...) threonine) is linked at Thr272. Residues Trp321 and Trp324 are each glycosylated (C-linked (Man) tryptophan). 3 disulfides stabilise this stretch: Cys327-Cys370, Cys337-Cys376, and Cys350-Cys360. Residues 351-359 form an interaction with Complement C3 beta chain region; the sequence is KGRKFDGHR. 3 C-linked (Man) tryptophan glycosylation sites follow: Trp382, Trp385, and Trp388. 3 cysteine pairs are disulfide-bonded: Cys391–Cys455, Cys395–Cys461, and Cys407–Cys439. N-linked (GlcNAc...) asparagine glycosylation occurs at Asn428.

As to quaternary structure, in plasma, properdin exists as dimers, trimers or tetramers in the relative proportions of 26:54:20. Interacts with the pro-C3-convertase enzyme complex (C3b-Bb) comprised of Complement C3 beta chain (C3b) and the Complement factor B Bb fragment (Bb), where it binds (via its TSP type-1 5 domain) with C3b and Bb. This interaction stabilizes the complex and allows it to become the active C3-convertase enzyme complex (C3b-Bb-FP). Interacts with C3b. Interacts with CFB.

It localises to the secreted. In terms of biological role, a positive regulator of the alternate pathway of complement. It binds to and stabilizes the C3- and C5-convertase enzyme complexes. Inhibits CFI-CFH mediated degradation of Inhibits CFI-CFH mediated degradation of Complement C3 beta chain (C3b). The protein is Properdin (CFP) of Pongo abelii (Sumatran orangutan).